Consider the following 126-residue polypeptide: Holo-[acyl-carrier-protein] synthase (126 aa).

Asp-9 and Glu-58 together coordinate Mg(2+).

Belongs to the P-Pant transferase superfamily. AcpS family. Requires Mg(2+) as cofactor.

It is found in the cytoplasm. The catalysed reaction is apo-[ACP] + CoA = holo-[ACP] + adenosine 3',5'-bisphosphate + H(+). In terms of biological role, transfers the 4'-phosphopantetheine moiety from coenzyme A to a Ser of acyl-carrier-protein. In Pectobacterium carotovorum subsp. carotovorum (strain PC1), this protein is Holo-[acyl-carrier-protein] synthase.